The sequence spans 2367 residues: MGTRGAVMPPPMWGLLGCCFVCAWALGGPRPIRSLPPLSSQVKPGSVPMQVPLEGAEAALAYLYSGDAQQLSQVNCSERYEARGAGAMPGLPPSLQGAAGTLAQAANFLNMLLQANDIRESSVEEDVEWYQALVRSVAEGDPRVYRALLTFNPPPGASHLQLALQATRTGEETILQDLSGNWVQEENPPGDLDTPALKKRVLTNDLGSLGSPKWPQADGYVGDTQQVRLSPPFLECQEGRLRPGWLITLSATFYGLKPDLSPEVRGQVQMDVDLQSVDINQCASGPGWYSNTHLCDLNSTQCVPLESQGFVLGRYLCRCRPGFYGASPSGGLEESDFQTTGQFGFPEGRSGRLLQCLPCPEGCTSCMDATPCLVEEAAVLRAAVLACQACCMLAIFLSMLVSYRCRRNKRIWASGVVLLETVLFGFLLLYFPVFILYFKPSVFRCIALRWVRLLGFAIVYGTIILKLYRVLQLFLSRTAQRSALLSSGRLLRRLGLLLLPVLGFLAVWTVGALERGIQHAPLVIRGHTPSGRHFYLCHHDRWDYIMVVAELLLLCWGSFLCYATRAVLSAFHEPRYMGIALHNELLLSAAFHTARFVLVPSLHPDWTLLLFFFHTHSTVTTTLALIFIPKFWKLGAPPREEMVDEVCEDELDLQHSGSYLGSSIASAWSEHSLDPGDIRDELKKLYAQLEVHKTKEMAANNPHLPKKRGSSCQGLGRSFMRYLAEFPEALARQHSRDSGSPGHGSLPGSSRRRLLSSSLQEPEGTPALHKSRSTYDQRREQDPPLLDSLLRRKLAKKASRTESRESVEGPPALGFRSASAHNLTVGERLPRARPASLQKSLSVASSREKALLMASQAYLEETYRQAKEREERKKAKAAMASLVRRPSARRLERPRGAPLSAPPSPAKSSSVDSSHTSGRLHEEARRRLPHPPIRHQVSTPILALSGGLGEPRMLSPTSTLAPALLPALAPTPAPALAPVPVSPQSPNLLTYICPWENAELPAKQENVPQEGPSGPERGHHSPAPARARLWRALSVAVEKSRAGENEMDAEDAHHQREANDVDEDRPKIFPKSHSLKAPVQQGSMRSLGLAIKALTRSRSTYREKESVEESPEGQNSGTAGESMGAPSRSPRLGRPKAVSKQAALIPSDDKESLQNQQNAHTSRMLQVCQREGSREQEDRGRRMTQGLGERKAERAGKTGLAMLRQVSRDKNIKQSKETPVGWQELPKAGLQSLGSADHRVAEVCPWEVTESETRQPDSGNKAEICPWETSEGAPESRALRQDPGDSQKKRGEARGKSEPIDVVPMMRKKPERLVREQEAVCPWESADRGGLSPGSAPQDPGRIRDKSEAGDSVEARKVEKPGWEAAGPEAHTPDITKAEPCPWEASEGGEDGKPAQEAVKDLPQEKQKTRKATFWKEQKPGGDLESLCPWESTDFRGPSAVSIQAPGSSECSGSLGSGIAEVCLWEAGDAPAIQKAEICPWELDDNVMGQEMLSLGTGRESLQEKEKASRKGSFGEMGEQTVKAVQKLSQQQESVCPRESTVPGHSSPCLDNSSSKAGSQFLCNGGSRATQVCPQEDLRPEAQEATPAKTEICPWEVNERTREEWTSAQVPRGGESQKDKEKMPGKSEIEDVTAWEKPEGQIQKQEAVGPWESVDPGSFSPQPRPQDTERPQTLLQMSGSVGSKAADICPLDVEENLTAGKAEICPWEVGAGAGEERALGAEAIRKSPNDTGKVSADLGPRERAVTAPEKPQKPTPEWEVACPWGSVGPGACSQHPGTLDADGPKAGFQELDHMGCRPGEVCPWEAQEAATSEKAKICPWEVSEGTTGKGLDQKAGSESAEQREKALEKGRLTSLGEDVSKGMAKLCQQQETICIWENKDLRESPAQAPKISDLPSSMSSEVAEGHSLEATEKGDLRQDPKTGSFPEHITQEKAPAADTEEFTTEDGEKTSHELQSVCPWETTAPADSVSHLDRQRPDQPKASSQRLVSTGGRAADVCPWDVPDAGVYKSDSSAKAETCPWEVTERIPVKGVSRQDGKGDSQEEKGRAPEKSEPKGVPVQKKPEMADFRQQEAVCPWESQDGKGLSPQPAPDASDRSRGSSEAAGSVETRVAEVCLWEVVEAPSAKKAEICPWEAGGGAAEEGEQERESQGQGEMFLQKAGPGGTEEHFSKAAAKPREQEAVCPGEGTGSGGLLPQSGALDPELKVSPKEAGSMGSRMAELCQWEITDPEGNKIKGTMADICPGEETGVPSEESGLLALTATRREFFPTAPEKPLCLLVHGPLDHFFPESKIPCPKVSRPASTFTLEGVRELQGPSGLEPRTSLAPEPSLQEAESQSSSLTEDSGQVAFEAQYEEFTPPTVYPWDWE.

Residues Met-1–Ala-25 form the signal peptide. At Leu-26 to Arg-381 the chain is on the extracellular side. The tract at residues Tyr-62–Trp-245 is cache-like region. Asn-75 carries an N-linked (GlcNAc...) asparagine glycan. Cys-76 and Cys-236 are joined by a disulfide. Asn-298 carries N-linked (GlcNAc...) asparagine glycosylation. Residues Ala-382 to Ser-402 form a helical membrane-spanning segment. At Tyr-403–Gly-415 the chain is on the cytoplasmic side. A helical transmembrane segment spans residues Val-416 to Leu-436. Residues Tyr-437–Arg-444 lie on the Extracellular side of the membrane. Residues Cys-445–Leu-465 traverse the membrane as a helical segment. Cys-445 and Cys-537 are oxidised to a cystine. Residues Lys-466 to Arg-493 lie on the Cytoplasmic side of the membrane. Residues Leu-494 to Glu-514 traverse the membrane as a helical segment. Topologically, residues Arg-515 to Asp-543 are extracellular. A helical transmembrane segment spans residues Tyr-544–Thr-564. Over Arg-565 to Arg-575 the chain is Cytoplasmic. Residues Tyr-576–Ala-594 traverse the membrane as a helical segment. Residues Arg-595 to Thr-607 lie on the Extracellular side of the membrane. Residues Leu-608–Ile-628 form a helical membrane-spanning segment. The Cytoplasmic portion of the chain corresponds to Pro-629–Glu-2367. Disordered regions lie at residues Ala-731 to Ala-818, Arg-869 to Pro-932, Lys-1039 to Ser-1083, Arg-1098 to Thr-1198, Glu-1247 to Glu-1431, Pro-1537 to Ala-1557, Asp-1577 to Gln-1672, Ala-1723 to Glu-1757, Ser-1823 to Leu-1852, Ala-1886 to Glu-2108, Trp-2133 to Gly-2212, and Gly-2308 to Glu-2367. The segment covering Ser-738–Leu-759 has biased composition (low complexity). Positions Ser-773–Asp-782 are enriched in basic and acidic residues. A compositionally biased stretch (basic and acidic residues) spans Lys-1039–Lys-1067. Positions Leu-1153–Met-1164 are enriched in polar residues. 4 stretches are compositionally biased toward basic and acidic residues: residues Glu-1171 to Arg-1181, Arg-1277 to Pro-1299, Gly-1341 to Gly-1362, and Glu-1390 to Gln-1407. Over residues Glu-1615–Glu-1639 the composition is skewed to basic and acidic residues. 6 stretches are compositionally biased toward basic and acidic residues: residues Ala-1840–Arg-1851, Ala-1903–Pro-1920, Ser-1970–Gln-1979, Val-2023–Pro-2054, Lys-2061–Gln-2070, and Thr-2165–Glu-2180. A compositionally biased stretch (low complexity) spans Pro-2326–Leu-2340.

It belongs to the G-protein coupled receptor 3 family. As to quaternary structure, homodimer. Associates with the R7 group RGS-GNB5 complexes, composed of an R7 group RGS subunit (RGS6, RGS7, RGS9 or RGS11) and GNB5, promoting their localization to the cell membrane and regulating the GTPase activator activity of R7 RGS proteins. Interacts with TRPM1. Interacts with GRM6. Interacts with EGFLAM; transsynaptic interaction is required for synaptic organization of photoreceptor cells. In terms of tissue distribution, expressed in the retina.

It localises to the cell membrane. The protein localises to the postsynaptic cell membrane. Its subcellular location is the cell projection. The protein resides in the dendrite. Functionally, orphan receptor involved in vision. Required for signal transduction through retinal depolarizing bipolar cells. Acts as an atypical G-protein coupled receptor that recruits and regulates the R7 group RGS-GNB5 complexes instead of activating G proteins: promotes the GTPase activator activity of R7 RGS proteins, increasing the GTPase activity of G protein alpha subunits, thereby driving them into their inactive GDP-bound form. Associates with components of metabotropic signaling cascade in retina ON-bipolar neurons, such as TRPM1 and GRM6: may control the ability of the GRM6 cascade to gate TRPM1. The protein is Probable G-protein coupled receptor 179 of Homo sapiens (Human).